Here is a 370-residue protein sequence, read N- to C-terminus: DNA replication and repair protein RecF (370 aa).

ATP is bound at residue 30 to 37 (GENAQGKT).

It belongs to the RecF family. Recruited to foci following DNA damage; probably interacts with RecO.

The protein resides in the cytoplasm. The protein localises to the nucleoid. In terms of biological role, the RecF protein is involved in DNA metabolism; it is required for DNA replication and normal SOS inducibility. RecF binds preferentially to single-stranded, linear DNA. It also seems to bind ATP. Is recruited to repair centers, foci that are the site of double-strand DNA break(s) after RecN and RecO; recruitment may depend on RecO. A positive modulator of RecA. This is DNA replication and repair protein RecF from Bacillus subtilis (strain 168).